The following is a 132-amino-acid chain: uncharacterized protein (132 aa).

This is an uncharacterized protein from Mycoplasma genitalium (strain ATCC 33530 / DSM 19775 / NCTC 10195 / G37) (Mycoplasmoides genitalium).